Here is a 372-residue protein sequence, read N- to C-terminus: Glutamate 5-kinase (372 aa).

Lys14 contacts ATP. Residues Ser54, Asp141, and Asn153 each contribute to the substrate site. Position 173-174 (173-174 (TD)) interacts with ATP. The region spanning 280–358 (RGHVVIDAGA…GEIEAVLGYM (79 aa)) is the PUA domain.

This sequence belongs to the glutamate 5-kinase family.

The protein localises to the cytoplasm. The catalysed reaction is L-glutamate + ATP = L-glutamyl 5-phosphate + ADP. Its pathway is amino-acid biosynthesis; L-proline biosynthesis; L-glutamate 5-semialdehyde from L-glutamate: step 1/2. Its function is as follows. Catalyzes the transfer of a phosphate group to glutamate to form L-glutamate 5-phosphate. This is Glutamate 5-kinase from Burkholderia thailandensis (strain ATCC 700388 / DSM 13276 / CCUG 48851 / CIP 106301 / E264).